A 434-amino-acid polypeptide reads, in one-letter code: MKLSHLLTSAVSVLSLGLTVEGHFSRSRNDAVGPKRPFKPLPYSHPRKKVCHVRSHGDGRDDSAFILSALKSCNNGGKVVFAEEKEYTIGTALDLTFLKHVDLEILGRIQFTNDTDYWQANSFKHTFQNATTFFQLGGEDVNVYGGGTLDGNGQIWYDLYAEDPLILRPILFGVIGLHGGTIGPLKLRYSPQWYQLVANSSDVLFDGIDISGYSKSENEAKNTDGWDTYRSKNIVIQNSVINNGDDCVSFKPNSTEILVQNLYCNGSHGISVGSLGQYIGEVDIVKNVLVYNISMYNASDMARIKVWPGVASAMSEDLQGGGGLGSVSNITYEDMYIENVDWAIEITQCYGQKNMTLCNEYPSNLTISDVYISNMYGTTSSARDPNIGTIVCSSPDVCSNIYVENIDVVSPSGTNDFICTNVNESLLQVNCTSG.

Residues 1-22 (MKLSHLLTSAVSVLSLGLTVEG) form the signal peptide. N-linked (GlcNAc...) asparagine glycosylation is found at asparagine 113, asparagine 129, and asparagine 199. The stretch at 231–252 (SKNIVIQNSVINNGDDCVSFKP) is one PbH1 1 repeat. Aspartate 245 (proton donor) is an active-site residue. An intrachain disulfide couples cysteine 247 to cysteine 264. 2 N-linked (GlcNAc...) asparagine glycosylation sites follow: asparagine 253 and asparagine 265. The stretch at 254-274 (STEILVQNLYCNGSHGISVGS) is one PbH1 2 repeat. The active site involves histidine 268. Residues asparagine 292, asparagine 297, asparagine 329, asparagine 354, and asparagine 364 are each glycosylated (N-linked (GlcNAc...) asparagine). The PbH1 3 repeat unit spans residues 327 to 348 (VSNITYEDMYIENVDWAIEITQ). One copy of the PbH1 4 repeat lies at 362–405 (PSNLTISDVYISNMYGTTSSARDPNIGTIVCSSPDVCSNIYVEN). A disulfide bridge connects residues cysteine 392 and cysteine 398. 2 N-linked (GlcNAc...) asparagine glycosylation sites follow: asparagine 423 and asparagine 430.

Belongs to the glycosyl hydrolase 28 family.

The protein resides in the secreted. It catalyses the reaction [(1-&gt;4)-alpha-D-galacturonosyl](n) + H2O = alpha-D-galacturonate + [(1-&gt;4)-alpha-D-galacturonosyl](n-1). Its function is as follows. Specific in hydrolyzing the terminal glycosidic bond of polygalacturonic acid and oligogalacturonates. In Emericella nidulans (strain FGSC A4 / ATCC 38163 / CBS 112.46 / NRRL 194 / M139) (Aspergillus nidulans), this protein is Exopolygalacturonase X-1 (pgaX-1).